The sequence spans 124 residues: UPF0382 membrane protein HI_1073 (124 aa).

Transmembrane regions (helical) follow at residues 6–26, 70–90, and 95–115; these read LTLV…AAHG, SMSS…ALAF, and VIVW…ISLA.

This sequence belongs to the UPF0382 family.

The protein resides in the cell membrane. The sequence is that of UPF0382 membrane protein HI_1073 from Haemophilus influenzae (strain ATCC 51907 / DSM 11121 / KW20 / Rd).